Consider the following 587-residue polypeptide: RuBisCO large subunit-binding protein subunit alpha, chloroplastic (587 aa).

Residues 1–25 (MASTNALSSTSILRSPTNQAQTSLS) show a composition bias toward polar residues. The segment at 1–33 (MASTNALSSTSILRSPTNQAQTSLSKKVKQHGR) is disordered. Residues 1-47 (MASTNALSSTSILRSPTNQAQTSLSKKVKQHGRVNFRQKPNRFVVKA) constitute a chloroplast transit peptide.

It belongs to the chaperonin (HSP60) family. Oligomer of probably six alpha and six beta subunits.

It localises to the plastid. Its subcellular location is the chloroplast. This protein binds RuBisCO small and large subunits and is implicated in the assembly of the enzyme oligomer. This chain is RuBisCO large subunit-binding protein subunit alpha, chloroplastic, found in Pisum sativum (Garden pea).